Reading from the N-terminus, the 69-residue chain is Protein hunchback (69 aa).

3 C2H2-type zinc fingers span residues 1-11 (KHHLEYHLRNH), 17-39 (FKCE…LKSH), and 45-69 (YRCA…KYSH).

This sequence belongs to the hunchback C2H2-type zinc-finger protein family.

It localises to the nucleus. Functionally, gap class segmentation protein that controls development of head structures. The protein is Protein hunchback (hb) of Apis mellifera (Honeybee).